The sequence spans 145 residues: Lipoprotein signal peptidase (145 aa).

2 consecutive transmembrane segments (helical) span residues 57–77 (LFFIVITVVVGIVLIYSMIKL) and 79–99 (ENSLYNYTLAMILGGAIGNLI). Catalysis depends on residues aspartate 109 and aspartate 124. A helical transmembrane segment spans residues 120-140 (FNVADSFIVVGAIILGYLMIF).

It belongs to the peptidase A8 family.

Its subcellular location is the cell membrane. The catalysed reaction is Release of signal peptides from bacterial membrane prolipoproteins. Hydrolyzes -Xaa-Yaa-Zaa-|-(S,diacylglyceryl)Cys-, in which Xaa is hydrophobic (preferably Leu), and Yaa (Ala or Ser) and Zaa (Gly or Ala) have small, neutral side chains.. Its pathway is protein modification; lipoprotein biosynthesis (signal peptide cleavage). Functionally, this protein specifically catalyzes the removal of signal peptides from prolipoproteins. This is Lipoprotein signal peptidase from Caldanaerobacter subterraneus subsp. tengcongensis (strain DSM 15242 / JCM 11007 / NBRC 100824 / MB4) (Thermoanaerobacter tengcongensis).